Consider the following 288-residue polypeptide: Quinate/shikimate dehydrogenase (288 aa).

Lys-71 and Asp-107 together coordinate substrate. NAD(+) is bound by residues 132-135, 155-158, Lys-205, 232-235, and Gly-255; these read AGGA, NRRD, and CVYN.

The protein belongs to the shikimate dehydrogenase family. In terms of assembly, homodimer.

The catalysed reaction is L-quinate + NAD(+) = 3-dehydroquinate + NADH + H(+). It catalyses the reaction L-quinate + NADP(+) = 3-dehydroquinate + NADPH + H(+). It carries out the reaction shikimate + NADP(+) = 3-dehydroshikimate + NADPH + H(+). The enzyme catalyses shikimate + NAD(+) = 3-dehydroshikimate + NADH + H(+). It functions in the pathway metabolic intermediate biosynthesis; chorismate biosynthesis; chorismate from D-erythrose 4-phosphate and phosphoenolpyruvate: step 4/7. Its function is as follows. The actual biological function of YdiB remains unclear, nor is it known whether 3-dehydroshikimate or quinate represents the natural substrate. Catalyzes the reversible NAD-dependent reduction of both 3-dehydroshikimate (DHSA) and 3-dehydroquinate to yield shikimate (SA) and quinate, respectively. It can use both NAD or NADP for catalysis, however it has higher catalytic efficiency with NAD. This chain is Quinate/shikimate dehydrogenase, found in Escherichia coli (strain SMS-3-5 / SECEC).